The following is an 89-amino-acid chain: Mitochondrial import inner membrane translocase subunit Tim9 (89 aa).

Position 2 is an N-acetylalanine (Ala2). A Twin CX3C motif motif is present at residues 28 to 52 (CFLDCVKDFTTREVKPEETTCSEHC). Intrachain disulfides connect Cys28–Cys52 and Cys32–Cys48.

The protein belongs to the small Tim family. As to quaternary structure, heterohexamer; composed of 3 copies of TIMM9 and 3 copies of TIMM10/TIM10A, named soluble 70 kDa complex. The complex forms a 6-bladed alpha-propeller structure and associates with the TIMM22 component of the TIM22 complex. Interacts with multi-pass transmembrane proteins in transit. Also forms a complex composed of TIMM9, TIMM10/TIM10A and FXC1/TIM10B. In terms of tissue distribution, ubiquitous, with highest expression in heart, kidney, liver and skeletal muscle.

Its subcellular location is the mitochondrion inner membrane. Its function is as follows. Mitochondrial intermembrane chaperone that participates in the import and insertion of multi-pass transmembrane proteins into the mitochondrial inner membrane. May also be required for the transfer of beta-barrel precursors from the TOM complex to the sorting and assembly machinery (SAM complex) of the outer membrane. Acts as a chaperone-like protein that protects the hydrophobic precursors from aggregation and guide them through the mitochondrial intermembrane space. The polypeptide is Mitochondrial import inner membrane translocase subunit Tim9 (TIMM9) (Homo sapiens (Human)).